We begin with the raw amino-acid sequence, 545 residues long: Carboxypeptidase N subunit 2 (545 aa).

The signal sequence occupies residues 1-21; it reads MLPGAWLLWTSLLLLARPAQP. An LRRNT domain is found at 22–49; that stretch reads CPMGCDCFVQEVFCSDEELATVPLDIPP. 3 N-linked (GlcNAc...) asparagine glycosylation sites follow: N74, N111, and N119. 12 LRR repeats span residues 98-119, 122-143, 146-167, 170-191, 194-215, 218-239, 242-263, 266-287, 290-311, 314-335, 338-359, and 362-383; these read RLEDLEVTGSSFLNLSTNIFSN, SLGKLTLNFNMLEALPEGLFQH, ALESLHLQGNQLQALPRRLFQP, HLKTLNLAQNLLAQLPEELFHP, SLQTLKLSNNALSGLPQGVFGK, SLQELFLDSNNISELPPQVFSQ, CLERLWLQRNAITHLPLSIFAS, NLTFLSLQWNMLRVLPAGLFAH, CLVGLSLTHNQLETVAEGTFAH, NLRSLMLSYNAITHLPAGIFRD, ELVKLYLGSNNLTALHPALFQN, and KLELLSLSKNQLTTLPEGIFDT. N-linked (GlcNAc...) asparagine glycosylation occurs at N228. N266 carries N-linked (GlcNAc...) asparagine glycosylation. 2 N-linked (GlcNAc...) asparagine glycosylation sites follow: N348 and N359. The 53-residue stretch at 395–447 folds into the LRRCT domain; the sequence is NPWQCDCHLAYLFNWLQQYTDRLLNIQTYCAGPAYLKGQVVPALNEKQLVCPV. The N-linked (GlcNAc...) asparagine glycan is linked to N518.

Tetramer of two catalytic chains and two glycosylated inactive chains. Whether or not any Cys residues participate in intrachain bonds is unknown, but they do not form interchain disulfide bonds with the 50 kDa catalytic subunit.

It localises to the secreted. Functionally, the 83 kDa subunit binds and stabilizes the catalytic subunit at 37 degrees Celsius and keeps it in circulation. Under some circumstances it may be an allosteric modifier of the catalytic subunit. The sequence is that of Carboxypeptidase N subunit 2 (CPN2) from Homo sapiens (Human).